The sequence spans 321 residues: Thioredoxin reductase (321 aa).

36 to 43 (TGMEKGGQ) contributes to the FAD binding site. A disulfide bridge links Cys-136 with Cys-139. An FAD-binding site is contributed by 287–296 (DVMDHIYRQA).

The protein belongs to the class-II pyridine nucleotide-disulfide oxidoreductase family. In terms of assembly, homodimer. The cofactor is FAD.

Its subcellular location is the cytoplasm. It carries out the reaction [thioredoxin]-dithiol + NADP(+) = [thioredoxin]-disulfide + NADPH + H(+). The sequence is that of Thioredoxin reductase (trxB) from Escherichia coli O157:H7.